Consider the following 262-residue polypeptide: Type III pantothenate kinase (262 aa).

An ATP-binding site is contributed by 9-16 (DIGNTNIV). Substrate-binding positions include Y103 and 110-113 (GVDR). D112 serves as the catalytic Proton acceptor. Position 132 (D132) interacts with K(+). Position 135 (T135) interacts with ATP. T187 provides a ligand contact to substrate.

It belongs to the type III pantothenate kinase family. As to quaternary structure, homodimer. Requires NH4(+) as cofactor. It depends on K(+) as a cofactor.

Its subcellular location is the cytoplasm. The enzyme catalyses (R)-pantothenate + ATP = (R)-4'-phosphopantothenate + ADP + H(+). It functions in the pathway cofactor biosynthesis; coenzyme A biosynthesis; CoA from (R)-pantothenate: step 1/5. Catalyzes the phosphorylation of pantothenate (Pan), the first step in CoA biosynthesis. In Finegoldia magna (strain ATCC 29328 / DSM 20472 / WAL 2508) (Peptostreptococcus magnus), this protein is Type III pantothenate kinase.